The primary structure comprises 69 residues: Sperm protamine P1 (69 aa).

The disordered stretch occupies residues 1 to 69 (MASYRNSRSR…RKRNNNTENK (69 aa)). Basic residues-rich tracts occupy residues 7-25 (SRSR…RSRV) and 34-63 (RSSR…RKRN).

This sequence belongs to the protamine P1 family. In terms of tissue distribution, testis.

The protein localises to the nucleus. It is found in the chromosome. Its function is as follows. Protamines substitute for histones in the chromatin of sperm during the haploid phase of spermatogenesis. They compact sperm DNA into a highly condensed, stable and inactive complex. This chain is Sperm protamine P1 (PRM1), found in Perameles gunnii (Eastern barred bandicoot).